Reading from the N-terminus, the 148-residue chain is Snaclec 2 (148 aa).

Positions 1-23 are cleaved as a signal peptide; it reads MGRFIFVSFGLLVVFLSLSGTEA. 3 disulfide bridges follow: C27–C38, C55–C144, and C121–C136. Residues 34 to 145 enclose the C-type lectin domain; that stretch reads YDQNCYKAFE…CSGTHSFVCK (112 aa).

This sequence belongs to the snaclec family. Heterodimer; disulfide-linked. In terms of tissue distribution, expressed by the venom gland.

Its subcellular location is the secreted. Interferes with one step of hemostasis (modulation of platelet aggregation, or coagulation cascade, for example). This Echis ocellatus (Ocellated saw-scaled viper) protein is Snaclec 2.